The sequence spans 422 residues: G-protein coupled receptor 151 protein (422 aa).

Residues 1-45 are Extracellular-facing; that stretch reads MGKAMLRAGFADTNSSNMNESFARLHFAGGYLPSDSKDWRTIIPS. N-linked (GlcNAc...) asparagine glycans are attached at residues N14 and N19. The helical transmembrane segment at 46 to 66 threads the bilayer; it reads LLMAVCLVGLVGNLCVIGILL. Residues 67 to 76 lie on the Cytoplasmic side of the membrane; that stretch reads HGVWKRKPST. The helical transmembrane segment at 77 to 97 threads the bilayer; sequence IHSLILNLSLADFSLLLFSAP. At 98–123 the chain is on the extracellular side; it reads VRAAAYSKGVWDLGWFICKSSDWFTH. Cysteines 115 and 191 form a disulfide. Residues 124–144 form a helical membrane-spanning segment; it reads VCMAAKSLTFVVVAKACFAYA. Topologically, residues 145-157 are cytoplasmic; it reads SDPAKQESIHSRT. A helical membrane pass occupies residues 158-178; that stretch reads IWSVLAGIWVVASLLPLPEWL. Residues 179-205 lie on the Extracellular side of the membrane; it reads FSTTRRHAGVEMCLVDVPAVAEEFMSM. Residues 206 to 226 form a helical membrane-spanning segment; it reads FGKLYPLLVFCLPLLLAGVYF. Residues 227 to 259 are Cytoplasmic-facing; sequence WRAYDQCKTRCTKTRNLRDQMRSKQLTVMLLST. A helical membrane pass occupies residues 260-280; it reads AIISALLWLPEWIAWLWVWHV. Residues 281 to 290 lie on the Extracellular side of the membrane; the sequence is KAGGPMPPQG. Residues 291–311 form a helical membrane-spanning segment; that stretch reads FIALSQVLMFFTSTANPLIFL. Residues 312-422 lie on the Cytoplasmic side of the membrane; it reads VMSEEFKAGL…HEGQETEGCN (111 aa). The interval 339-422 is disordered; it reads VQEAPAGNTE…HEGQETEGCN (84 aa). Residues 366 to 380 are compositionally biased toward basic and acidic residues; the sequence is TDGRGSPDDSKEKSG.

As to expression, high expression in the brain and lower levels in kidney and liver. In the nervous system expressed specifically in the habenular area (at protein level).

Its subcellular location is the cell membrane. Proton-sensing G-protein coupled receptor. The protein is G-protein coupled receptor 151 protein (Gpr151) of Mus musculus (Mouse).